The sequence spans 496 residues: Fusarielin biosynthesis cluster transcription factor FSL7 (496 aa).

A DNA-binding region (zn(2)-C6 fungal-type) is located at residues Cys-16–Cys-46. 5 disordered regions span residues Pro-57 to Ser-102, Arg-189 to Met-224, Ala-281 to Ser-307, Gly-348 to Thr-379, and Met-444 to Ala-470. Composition is skewed to polar residues over residues Gly-65–Met-89 and Glu-207–Pro-218. Residues Ala-281–Thr-294 show a composition bias toward low complexity. A compositionally biased stretch (polar residues) spans Tyr-355–Thr-379. Positions Met-444–Thr-460 are enriched in basic and acidic residues.

Its subcellular location is the nucleus. In terms of biological role, transcription regulator that specifically up-regulates the gene cluster that mediates the biosynthesis of fusarielins F, G and H, decaketide compounds with 5 methylations and a decaline core that act as mycoestrogens as they stimulate growth of MCF-7 breast cancer cells. Probably binds the 5'-CGGNNNCCG-3' motif present in the promoter of all the cluster genes. This Gibberella zeae (strain ATCC MYA-4620 / CBS 123657 / FGSC 9075 / NRRL 31084 / PH-1) (Wheat head blight fungus) protein is Fusarielin biosynthesis cluster transcription factor FSL7.